The sequence spans 245 residues: 1-(5-phosphoribosyl)-5-[(5-phosphoribosylamino)methylideneamino] imidazole-4-carboxamide isomerase (245 aa).

The active-site Proton acceptor is aspartate 7. Residue aspartate 129 is the Proton donor of the active site.

Belongs to the HisA/HisF family.

The protein resides in the cytoplasm. The enzyme catalyses 1-(5-phospho-beta-D-ribosyl)-5-[(5-phospho-beta-D-ribosylamino)methylideneamino]imidazole-4-carboxamide = 5-[(5-phospho-1-deoxy-D-ribulos-1-ylimino)methylamino]-1-(5-phospho-beta-D-ribosyl)imidazole-4-carboxamide. It functions in the pathway amino-acid biosynthesis; L-histidine biosynthesis; L-histidine from 5-phospho-alpha-D-ribose 1-diphosphate: step 4/9. This is 1-(5-phosphoribosyl)-5-[(5-phosphoribosylamino)methylideneamino] imidazole-4-carboxamide isomerase from Pectobacterium atrosepticum (strain SCRI 1043 / ATCC BAA-672) (Erwinia carotovora subsp. atroseptica).